Consider the following 635-residue polypeptide: MQDDILESEMSKAPQLQQESQEGQDKQTLSPPGHQEPPGIISELDNALPEENQLEKGTMENANGKETLRLESPVLSGFDYQETTGIGTLAQSSSSSSSSLTGFSSWSTAMPPNPSTLIEEVGFFNQAATTNNAPPPLLFQSFSHHTSTGFGGNFSHQIGPLSQHHPSPHPHFQHPHNQHRRSSASPHPPPFSHRSAAFNQLPHLGNNLSKPPSPWGSYQSPSSTPSSTSWSPGGGYGGWGSSQGREYRRGGVNPLNSISPLKKSFPNNQTQTQKYPRNNSGFNTKPWVEDTINRNESIFPFQERSRSFDGFSMHSLENSLIDIMRAEQDSLKGHSSLFPMEDERSYGEDERSDQSLSGLGSPHSFPHQNGERIERYSRKVFVGGLPPDIDEDEITASFRRFGHLFVDWPHKAESKSYFPPKGYAFLLFQDESSVQALIDACMEEDGKLYLCVSSPTIKDKPVQIRPWNLNDSDFVMDGSQPLDPRKTIFVGGVPRPLRAVELAMIMDRLYGGVCYAGIDTDPELKYPKGAGRVAFSNQQSYIAAISARFVQLQHGEIDKRVEVKPYVLDDQLCDECQGTRCGGKFAPFFCANVTCLQYYCEYCWAAIHSRAGREFHKPLVKEGGDRPRHISFRWN.

3 disordered regions span residues 1 to 70 (MQDD…TLRL), 149 to 284 (GFGG…GFNT), and 337 to 369 (LFPM…PHQN). Polar residues predominate over residues 14–30 (PQLQQESQEGQDKQTLS). Positions 166–182 (PSPHPHFQHPHNQHRRS) are enriched in basic residues. A compositionally biased stretch (low complexity) spans 216 to 231 (GSYQSPSSTPSSTSWS). The span at 232-241 (PGGGYGGWGS) shows a compositional bias: gly residues. Residues 254–283 (PLNSISPLKKSFPNNQTQTQKYPRNNSGFN) are compositionally biased toward polar residues. The span at 341–353 (EDERSYGEDERSD) shows a compositional bias: basic and acidic residues. 2 consecutive RRM domains span residues 378–469 (RKVF…PWNL) and 486–568 (KTIF…PYVL).

It belongs to the RRM CPEB family.

The protein resides in the cytoplasm. It localises to the cell projection. The protein localises to the dendrite. Its subcellular location is the dendritic spine. It is found in the postsynaptic density. The protein resides in the axon. It localises to the growth cone. The protein localises to the endoplasmic reticulum. Its subcellular location is the perinuclear region. Its function is as follows. Sequence-specific RNA-binding protein that binds to the cytoplasmic polyadenylation element (CPE), an uridine-rich sequence element (consensus sequence 5'-UUUUUAU-3') within the mRNA 3'-UTR. RNA binding results in a clear conformational change analogous to the Venus fly trap mechanism. This is Cytoplasmic polyadenylation element-binding protein 4 (cpeb4) from Danio rerio (Zebrafish).